The sequence spans 25 residues: Css54 (25 aa).

Expressed by the venom gland.

Its subcellular location is the secreted. It localises to the target cell membrane. In terms of biological role, amphipathic peptide that shows antibacterial activity against E.coli (MIC=12.5 ug/ml) and S.aureus (MIC=12.5 ug/ml). Has hemolytic activity against human erythrocytes (25 uM provokes 83% of hemolysis). May act by disrupting the integrity of the bacterial cell membrane. Increases efficacy of antibiotics (ethambutol, pyrazinamide, isoniazid, rifampicin) when tested against S.aureus, probably by facilitating their incorporation into the bacteria. In Centruroides suffusus (Durango bark scorpion), this protein is Css54.